A 200-amino-acid polypeptide reads, in one-letter code: Small ribosomal subunit protein uS4 (200 aa).

Residues 92–155 (SRLDNLVYRM…RNLTVVKEAL (64 aa)) form the S4 RNA-binding domain.

This sequence belongs to the universal ribosomal protein uS4 family. In terms of assembly, part of the 30S ribosomal subunit. Contacts protein S5. The interaction surface between S4 and S5 is involved in control of translational fidelity.

In terms of biological role, one of the primary rRNA binding proteins, it binds directly to 16S rRNA where it nucleates assembly of the body of the 30S subunit. Functionally, with S5 and S12 plays an important role in translational accuracy. The sequence is that of Small ribosomal subunit protein uS4 from Shouchella clausii (strain KSM-K16) (Alkalihalobacillus clausii).